A 123-amino-acid polypeptide reads, in one-letter code: UPF0102 protein Pput_4400 (123 aa).

This sequence belongs to the UPF0102 family.

This is UPF0102 protein Pput_4400 from Pseudomonas putida (strain ATCC 700007 / DSM 6899 / JCM 31910 / BCRC 17059 / LMG 24140 / F1).